The chain runs to 513 residues: ATP synthase subunit alpha (513 aa).

ATP is bound at residue 169–176 (GDRQTGKS).

This sequence belongs to the ATPase alpha/beta chains family. In terms of assembly, F-type ATPases have 2 components, CF(1) - the catalytic core - and CF(0) - the membrane proton channel. CF(1) has five subunits: alpha(3), beta(3), gamma(1), delta(1), epsilon(1). CF(0) has three main subunits: a(1), b(2) and c(9-12). The alpha and beta chains form an alternating ring which encloses part of the gamma chain. CF(1) is attached to CF(0) by a central stalk formed by the gamma and epsilon chains, while a peripheral stalk is formed by the delta and b chains.

It is found in the cell inner membrane. It catalyses the reaction ATP + H2O + 4 H(+)(in) = ADP + phosphate + 5 H(+)(out). Produces ATP from ADP in the presence of a proton gradient across the membrane. The alpha chain is a regulatory subunit. The protein is ATP synthase subunit alpha of Sodalis glossinidius (strain morsitans).